We begin with the raw amino-acid sequence, 534 residues long: Glucans biosynthesis protein D (534 aa).

A signal peptide (tat-type signal) is located at residues 1–26 (MQRRDFIRNASLALAAFGLPSLPACA).

Belongs to the OpgD/OpgG family. In terms of processing, predicted to be exported by the Tat system. The position of the signal peptide cleavage has not been experimentally proven.

It is found in the periplasm. It participates in glycan metabolism; osmoregulated periplasmic glucan (OPG) biosynthesis. Its function is as follows. Probably involved in the control of the structural glucose backbone of osmoregulated periplasmic glucans (OPGs). In Stenotrophomonas maltophilia (strain K279a), this protein is Glucans biosynthesis protein D.